Here is an 84-residue protein sequence, read N- to C-terminus: Esculentin-1ISb (84 aa).

A signal peptide spans 1-22; it reads MFTLKKPLLLIVLLGIISLSLC. A propeptide spans 23-36 (removed in mature form); sequence EQERAADEDEGTKI. C78 and C84 are joined by a disulfide.

Expressed by the skin glands.

It localises to the secreted. Functionally, has antimicrobial activity against Gram-negative bacterium E.coli ATCC 8739 (MIC=3.1 ug), against Gram positive bacteria S.aureus ATCC 6538 (MIC=3.1 ug), methicillin-resistant S.aureus ATCC 43300 (MIC=12.5 ug), B.subtilis ATCC 6633 (MIC=12.5 ug) and against fungus C.albicans ATCC 90028 (MIC=50 ug). This chain is Esculentin-1ISb, found in Odorrana ishikawae (Ishikawa's frog).